Here is a 466-residue protein sequence, read N- to C-terminus: 3-isopropylmalate dehydratase large subunit (466 aa).

3 residues coordinate [4Fe-4S] cluster: Cys-347, Cys-407, and Cys-410.

The protein belongs to the aconitase/IPM isomerase family. LeuC type 1 subfamily. In terms of assembly, heterodimer of LeuC and LeuD. [4Fe-4S] cluster is required as a cofactor.

The catalysed reaction is (2R,3S)-3-isopropylmalate = (2S)-2-isopropylmalate. Its pathway is amino-acid biosynthesis; L-leucine biosynthesis; L-leucine from 3-methyl-2-oxobutanoate: step 2/4. Catalyzes the isomerization between 2-isopropylmalate and 3-isopropylmalate, via the formation of 2-isopropylmaleate. The polypeptide is 3-isopropylmalate dehydratase large subunit (Escherichia fergusonii (strain ATCC 35469 / DSM 13698 / CCUG 18766 / IAM 14443 / JCM 21226 / LMG 7866 / NBRC 102419 / NCTC 12128 / CDC 0568-73)).